A 186-amino-acid polypeptide reads, in one-letter code: Hydra actinoporin-like toxin 5 (186 aa).

The N-terminal stretch at 1 to 20 (MLLYVCLVNLLLQSPSGVDS) is a signal peptide. A Cell attachment site motif is present at residues 158–160 (RDG).

It belongs to the actinoporin family. HALT subfamily. As to quaternary structure, octamer or nonamer in membranes. Monomer in the soluble state. In vitro, interacts with folate receptor alpha (of target organism).

Its subcellular location is the nematocyst. It localises to the secreted. The protein localises to the target cell membrane. Its function is as follows. Pore-forming protein that forms hydrophilic pores and causes cytolysis. Compared to equinatoxin-2 (AC P61914), it reveals lower cytolysis activity (5-12-fold difference, tested on erythrocytes), a larger pore size (probably 2-3 nm) and different affinity to membrane lipids (100-fold lower affinity to sphingomyelin). Binds to sulfatides (SFT) as well as to the two sphingolipids, lysophosphatidic acid (LPA) and sphingosine-1-phosphate (S1P). It seems to bind more strongly to LPA than to S1P and SFT. Shows cytolytic activity on HeLa cells, with a different potency than its paralogs (from most potent to less potent: HALT-4&gt;HALT-6~HALT-1&gt;HALT-3&gt;HALT-7&gt;HALT-2). Pore formation is a multi-step process that involves specific recognition of membrane lipid by a protein aromatic residues rich region, firm binding to the membrane (mainly driven by hydrophobic interactions) accompanied by the transfer of the N-terminal region to the lipid-water interface and finally pore formation after oligomerization of monomers. In vitro, binds to the folate receptor alpha (FOLR1), a GPI-anchored membrane protein that plays a major role in the uptake of folate/folic acid into cells via endocytosis, suggesting a possible involvement of this receptor in the mechanism of HALT-1-induced cell lysis. In vivo, does not cause visible paralysis in larvae of the blowfly Sarcophaga faculata, the most common arthropod prey of Hydra. The sequence is that of Hydra actinoporin-like toxin 5 from Hydra vulgaris (Hydra).